We begin with the raw amino-acid sequence, 153 residues long: Putative WASP homolog-associated protein with actin, membranes and microtubules-like protein 1 (153 aa).

A coiled-coil region spans residues 113 to 151; that stretch reads AIQFYEIQLELYEVKFEILKNKEILLTTQLDSLERLIKD.

This Homo sapiens (Human) protein is Putative WASP homolog-associated protein with actin, membranes and microtubules-like protein 1 (WHAMMP3).